We begin with the raw amino-acid sequence, 416 residues long: Gamma-glutamyl phosphate reductase (416 aa).

This sequence belongs to the gamma-glutamyl phosphate reductase family.

It localises to the cytoplasm. The enzyme catalyses L-glutamate 5-semialdehyde + phosphate + NADP(+) = L-glutamyl 5-phosphate + NADPH + H(+). The protein operates within amino-acid biosynthesis; L-proline biosynthesis; L-glutamate 5-semialdehyde from L-glutamate: step 2/2. In terms of biological role, catalyzes the NADPH-dependent reduction of L-glutamate 5-phosphate into L-glutamate 5-semialdehyde and phosphate. The product spontaneously undergoes cyclization to form 1-pyrroline-5-carboxylate. This chain is Gamma-glutamyl phosphate reductase, found in Petrotoga mobilis (strain DSM 10674 / SJ95).